The primary structure comprises 94 residues: Scorpine-like-1 (94 aa).

An N-terminal signal peptide occupies residues 1 to 18 (MNTKFTVLIFLGVIVVSY). The BetaSPN-type CS-alpha/beta domain maps to 54–94 (EYGCMMDISWNKDCQRHCQSTEQKDGICHGMKCKCGKPRSY). 3 cysteine pairs are disulfide-bonded: Cys57/Cys81, Cys67/Cys86, and Cys71/Cys88.

Belongs to the long chain scorpion toxin family. Class 3 subfamily. As to expression, expressed by the venom gland.

It is found in the secreted. Its function is as follows. Has antibacterial activity. The sequence is that of Scorpine-like-1 from Urodacus yaschenkoi (Inland robust scorpion).